The chain runs to 106 residues: Phosphoribosyl-ATP pyrophosphatase (106 aa).

This sequence belongs to the PRA-PH family.

The protein resides in the cytoplasm. The enzyme catalyses 1-(5-phospho-beta-D-ribosyl)-ATP + H2O = 1-(5-phospho-beta-D-ribosyl)-5'-AMP + diphosphate + H(+). The protein operates within amino-acid biosynthesis; L-histidine biosynthesis; L-histidine from 5-phospho-alpha-D-ribose 1-diphosphate: step 2/9. The protein is Phosphoribosyl-ATP pyrophosphatase of Rhizorhabdus wittichii (strain DSM 6014 / CCUG 31198 / JCM 15750 / NBRC 105917 / EY 4224 / RW1) (Sphingomonas wittichii).